The primary structure comprises 245 residues: Orotidine 5'-phosphate decarboxylase (245 aa).

Substrate is bound by residues D22, K44, D71–T80, T131, R192, Q201, G221, and R222. K73 (proton donor) is an active-site residue.

The protein belongs to the OMP decarboxylase family. Type 1 subfamily. In terms of assembly, homodimer.

It catalyses the reaction orotidine 5'-phosphate + H(+) = UMP + CO2. The protein operates within pyrimidine metabolism; UMP biosynthesis via de novo pathway; UMP from orotate: step 2/2. Catalyzes the decarboxylation of orotidine 5'-monophosphate (OMP) to uridine 5'-monophosphate (UMP). This is Orotidine 5'-phosphate decarboxylase from Escherichia coli O45:K1 (strain S88 / ExPEC).